Here is a 310-residue protein sequence, read N- to C-terminus: Homoserine kinase (310 aa).

Position 85–95 (85–95) interacts with ATP; that stretch reads PKGLGLGSSGA.

Belongs to the GHMP kinase family. Homoserine kinase subfamily.

Its subcellular location is the cytoplasm. The catalysed reaction is L-homoserine + ATP = O-phospho-L-homoserine + ADP + H(+). It functions in the pathway amino-acid biosynthesis; L-threonine biosynthesis; L-threonine from L-aspartate: step 4/5. In terms of biological role, catalyzes the ATP-dependent phosphorylation of L-homoserine to L-homoserine phosphate. In Thermoplasma acidophilum (strain ATCC 25905 / DSM 1728 / JCM 9062 / NBRC 15155 / AMRC-C165), this protein is Homoserine kinase.